We begin with the raw amino-acid sequence, 235 residues long: C-&gt;U-editing enzyme APOBEC-1 (235 aa).

One can recognise a CMP/dCMP-type deaminase domain in the interval 10-131 (GDATLRRRIK…MDQQHRQGLK (122 aa)). His-60 contacts Zn(2+). The active-site Proton donor is Glu-62. 2 residues coordinate Zn(2+): Cys-92 and Cys-95.

The protein belongs to the cytidine and deoxycytidylate deaminase family. Homodimer. Interacts with A1CF; form an mRNA editing complex. Interacts with RBM47; form an mRNA editing complex. Found in a complex with CELF2/CUGBP2 and A1CF. Interacts with HNRPAB. Interacts with SYNCRIP. Zn(2+) serves as cofactor.

Its subcellular location is the cytoplasm. The protein resides in the nucleus. The enzyme catalyses a cytidine in mRNA + H2O + H(+) = a uridine in mRNA + NH4(+). It carries out the reaction cytidine(6666) in apoB mRNA + H2O + H(+) = uridine(6666) in apoB mRNA + NH4(+). Functionally, cytidine deaminase catalyzing the cytidine to uridine postranscriptional editing of a variety of mRNAs. Form complexes with cofactors that confer differential editing activity and selectivity. Responsible for the postranscriptional editing of a CAA codon for Gln to a UAA codon for stop in the apolipoprotein B mRNA. Also involved in CGA (Arg) to UGA (Stop) editing in the NF1 mRNA. May also play a role in the epigenetic regulation of gene expression by participating in DNA demethylation. This Monodelphis domestica (Gray short-tailed opossum) protein is C-&gt;U-editing enzyme APOBEC-1.